The sequence spans 254 residues: Glutamate racemase (254 aa).

Substrate-binding positions include 7–8 and 39–40; these read DS and YG. The Proton donor/acceptor role is filled by C70. Residues 71–72 and E147 contribute to the substrate site; that span reads NT. The Proton donor/acceptor role is filled by C178. Position 179–180 (179–180) interacts with substrate; the sequence is TH.

It belongs to the aspartate/glutamate racemases family. Homodimer.

The enzyme catalyses L-glutamate = D-glutamate. It functions in the pathway cell wall biogenesis; peptidoglycan biosynthesis. Provides the (R)-glutamate required for cell wall biosynthesis. Converts L- or D-glutamate to D- or L-glutamate, respectively, but not other amino acids such as alanine, aspartate, and glutamine. In Aquifex pyrophilus, this protein is Glutamate racemase.